The following is a 271-amino-acid chain: Proteasome inhibitor PI31 subunit (271 aa).

At alanine 2 the chain carries N-acetylalanine. The segment at 2 to 150 (AGLEVLFASA…PIHEQWEKAN (149 aa)) is important for homodimerization and interaction with FBXO7. The residue at position 153 (serine 153) is a Phosphoserine. Arginine 205 is subject to Omega-N-methylarginine. Arginine 219 is subject to Asymmetric dimethylarginine. The disordered stretch occupies residues 222-271 (IDPSSGLPNRLPPGAVPPGARFDPFGPIGTSPPGPNPDHLPPPGYDDMYL). Position 231 is an omega-N-methylarginine (arginine 231). The span at 251-265 (TSPPGPNPDHLPPPG) shows a compositional bias: pro residues. At serine 252 the chain carries Phosphoserine.

It belongs to the proteasome inhibitor PI31 family. As to quaternary structure, monomer and homodimer. Interacts with FBXO7. Interacts with the 20S proteasome.

It is found in the cytoplasm. It localises to the endoplasmic reticulum. In terms of biological role, plays an important role in control of proteasome function. Inhibits the hydrolysis of protein and peptide substrates by the 20S proteasome. Also inhibits the activation of the proteasome by the proteasome regulatory proteins PA700 and PA28. This Homo sapiens (Human) protein is Proteasome inhibitor PI31 subunit (PSMF1).